Reading from the N-terminus, the 143-residue chain is Large ribosomal subunit protein uL11 (143 aa).

It belongs to the universal ribosomal protein uL11 family. In terms of assembly, part of the ribosomal stalk of the 50S ribosomal subunit. Interacts with L10 and the large rRNA to form the base of the stalk. L10 forms an elongated spine to which L12 dimers bind in a sequential fashion forming a multimeric L10(L12)X complex. One or more lysine residues are methylated.

Functionally, forms part of the ribosomal stalk which helps the ribosome interact with GTP-bound translation factors. The polypeptide is Large ribosomal subunit protein uL11 (Paraburkholderia phytofirmans (strain DSM 17436 / LMG 22146 / PsJN) (Burkholderia phytofirmans)).